A 298-amino-acid polypeptide reads, in one-letter code: Lipoyl synthase (298 aa).

Residues cysteine 40, cysteine 45, cysteine 51, cysteine 67, cysteine 71, cysteine 74, and serine 280 each contribute to the [4Fe-4S] cluster site. The Radical SAM core domain maps to 53–269; sequence AVRRTATFMI…KEIAMQKGFS (217 aa).

It belongs to the radical SAM superfamily. Lipoyl synthase family. [4Fe-4S] cluster serves as cofactor.

Its subcellular location is the cytoplasm. It catalyses the reaction [[Fe-S] cluster scaffold protein carrying a second [4Fe-4S](2+) cluster] + N(6)-octanoyl-L-lysyl-[protein] + 2 oxidized [2Fe-2S]-[ferredoxin] + 2 S-adenosyl-L-methionine + 4 H(+) = [[Fe-S] cluster scaffold protein] + N(6)-[(R)-dihydrolipoyl]-L-lysyl-[protein] + 4 Fe(3+) + 2 hydrogen sulfide + 2 5'-deoxyadenosine + 2 L-methionine + 2 reduced [2Fe-2S]-[ferredoxin]. The protein operates within protein modification; protein lipoylation via endogenous pathway; protein N(6)-(lipoyl)lysine from octanoyl-[acyl-carrier-protein]. In terms of biological role, catalyzes the radical-mediated insertion of two sulfur atoms into the C-6 and C-8 positions of the octanoyl moiety bound to the lipoyl domains of lipoate-dependent enzymes, thereby converting the octanoylated domains into lipoylated derivatives. The polypeptide is Lipoyl synthase (Bacillus subtilis (strain 168)).